The chain runs to 150 residues: Endoribonuclease YbeY (150 aa).

Zn(2+)-binding residues include histidine 116, histidine 120, and histidine 126.

The protein belongs to the endoribonuclease YbeY family. Zn(2+) serves as cofactor.

The protein resides in the cytoplasm. Its function is as follows. Single strand-specific metallo-endoribonuclease involved in late-stage 70S ribosome quality control and in maturation of the 3' terminus of the 16S rRNA. This Beutenbergia cavernae (strain ATCC BAA-8 / DSM 12333 / CCUG 43141 / JCM 11478 / NBRC 16432 / NCIMB 13614 / HKI 0122) protein is Endoribonuclease YbeY.